Reading from the N-terminus, the 301-residue chain is Homeobox protein knotted-1-like 1 (301 aa).

The segment at 141 to 170 (CSGATSPPATTATHSDEMVGSSDEDQCSGE) is disordered. Low complexity predominate over residues 144–153 (ATSPPATTAT). The 21-residue stretch at 188-208 (ELKEMLLKKYSGCLSRLRSEF) folds into the ELK domain. Positions 209 to 272 (LKKRKKGKLP…NQRKRHWKPS (64 aa)) form a DNA-binding region, homeobox; TALE-type.

Belongs to the TALE/KNOX homeobox family.

The protein resides in the nucleus. In terms of biological role, probable transcription factor that may be involved in shoot formation during early embryogenesis. This chain is Homeobox protein knotted-1-like 1 (OSH6), found in Oryza sativa subsp. japonica (Rice).